The primary structure comprises 491 residues: MNTQQLAKLRSIVPEMRRVRHIHFVGIGGAGMGGIAEVLANEGYQISGSDLAPNPVTQQLTSLGATIFFNHRPENVRDASVVVVSSAISADNPEIVAAHEARIPVIRRAEMLAELMRFRHGIAIAGTHGKTTTTAMVSSIYAEAGLDPTFVNGGLVKAAGVHARLGHSRYLIAEADESDASFLHLQPMVAIVTNIEADHMDTYHGDFENLKQTFINFLHNLPFYGRAVMCVDDPVIRELLPRVGRQTTTYGFSEDADVRVEDYQQIGPQGHFTLLRQGMPDLHVTLNAPGRHNALNAAAAVAVATEEGIDDDAILRALESFQGTGRRFDFLGEFPLEPVNGKAGTAMLVDDYGHHPTEVDATIKAARAGWPDKKLVMLFQPHRYTRTRDLYDDFANVLTQVDALLMLDVYPAGEAPIPGADSRSLCRTIRNRGKIDPILVSDPAQVATMLAPVLTGNDLILVQGAGNVGKIARYLSEIKLKPQIQEEEQHG.

126 to 132 (GTHGKTT) lines the ATP pocket.

The protein belongs to the MurCDEF family.

It is found in the cytoplasm. It catalyses the reaction UDP-N-acetyl-alpha-D-muramate + L-alanine + ATP = UDP-N-acetyl-alpha-D-muramoyl-L-alanine + ADP + phosphate + H(+). The protein operates within cell wall biogenesis; peptidoglycan biosynthesis. Functionally, cell wall formation. This chain is UDP-N-acetylmuramate--L-alanine ligase, found in Salmonella paratyphi C (strain RKS4594).